The following is a 390-amino-acid chain: Altered inheritance of mitochondria protein 6 (390 aa).

Residues M1–A17 form the signal peptide.

This sequence belongs to the AIM6 family.

The chain is Altered inheritance of mitochondria protein 6 from Saccharomyces cerevisiae (strain ATCC 204508 / S288c) (Baker's yeast).